A 569-amino-acid polypeptide reads, in one-letter code: Putative potassium-transporting ATPase ATP-binding subunit (569 aa).

Helical transmembrane passes span 34–54 (PVMF…LAMV) and 58–78 (IAGS…TVLF). Asp-194 serves as the catalytic 4-aspartylphosphate intermediate. Residues Asp-231, Glu-235, 264 to 271 (FTAQSRMS), and Lys-282 contribute to the ATP site. Mg(2+) contacts are provided by Asp-405 and Asp-409. 3 helical membrane-spanning segments follow: residues 475–495 (FAII…LNVM), 503–523 (AILS…PLAL), and 543–563 (IYGL…DVLL).

This sequence belongs to the cation transport ATPase (P-type) (TC 3.A.3) family. Type IA subfamily. The system is composed of three essential subunits: KdpA, KdpB and KdpC.

It is found in the cell inner membrane. It catalyses the reaction K(+)(out) + ATP + H2O = K(+)(in) + ADP + phosphate + H(+). In terms of biological role, part of the high-affinity ATP-driven potassium transport (or Kdp) system, which catalyzes the hydrolysis of ATP coupled with the electrogenic transport of potassium into the cytoplasm. This subunit is responsible for energy coupling to the transport system and for the release of the potassium ions to the cytoplasm. The sequence is that of Putative potassium-transporting ATPase ATP-binding subunit from Salmonella typhi.